Reading from the N-terminus, the 152-residue chain is MAGRISCCLNLPPLDSNSAQSLASLLKTTSKISCRRTENETEPRKNKCSFVLGVAATVVIGGIQINDVASVEAAVVKSPVEEMAAGVVPPRRWSDKRTCPPWLENSLETIVPENLPRPSAHRRLELAGLAKGDAPPVGVVMTRVNRGGCFSV.

A chloroplast-targeting transit peptide spans 1–22 (MAGRISCCLNLPPLDSNSAQSL). The chain crosses the membrane as a helical span at residues 48–65 (CSFVLGVAATVVIGGIQI). The tract at residues 92-152 (RWSDKRTCPP…RVNRGGCFSV (61 aa)) is important for chloroplast destabilization and the formation of CV-containing vesicles.

As to quaternary structure, interacts with the photosystem II subunit PsbO1 via its C-terminal region in the chloroplast thylakoid membrane and in CV-containing vesicles (CCVs). Mostly expressed in senescent and mature leaves but not in young leaves.

The protein resides in the plastid. The protein localises to the chloroplast membrane. It localises to the chloroplast thylakoid membrane. Its subcellular location is the chloroplast envelope. It is found in the vacuole. The protein resides in the vesicle. Its function is as follows. Triggers stress-induced chloroplast degradation, independently of autophagy and senescence-associated vacuoles. After targeting to the chloroplast, triggers its destabilization and subsequent disassembly, inducing the formation of CV-containing vesicles (CCVs) carrying stromal proteins, envelope membrane proteins, and thylakoid membrane proteins which are released from the chloroplasts and mobilized to the vacuole for proteolysis. The polypeptide is Protein CHLOROPLAST VESICULATION (Arabidopsis thaliana (Mouse-ear cress)).